The chain runs to 320 residues: MTFRARHLLGIEQLAPDEIRSVLDLADSYVDLNRRTMKQSDALAGMTQINMFFENSTRTQSSFELAGKRLGADVMNMAVAQSSVKKGETLLDTAMTLNAMHPDLLVVRHPASGAVNLLASKVNCAVLNAGDGRHEHPTQALLDALTIRRAKGRIQRLTVAICGDIAHSRVARSNLILLGKMENRVRLIAPPTLMPPGVGEFGCELYDDMKKGLEGADVVMMLRLQKERMDGAFIPSEREYYHRFGLDADKLAFAREDAIVMHPGPMNRGVEIDGTLADDINRSVIQDQVEMGVAVRMACMDLLARNLRAERGRAAVGVMV.

Carbamoyl phosphate contacts are provided by Arg58 and Thr59. Lys86 contacts L-aspartate. Arg108, His136, and Gln139 together coordinate carbamoyl phosphate. L-aspartate-binding residues include Arg169 and Arg223. 2 residues coordinate carbamoyl phosphate: Gly264 and Pro265.

Belongs to the aspartate/ornithine carbamoyltransferase superfamily. ATCase family. In terms of assembly, heterododecamer (2C3:3R2) of six catalytic PyrB chains organized as two trimers (C3), and six regulatory PyrI chains organized as three dimers (R2).

It carries out the reaction carbamoyl phosphate + L-aspartate = N-carbamoyl-L-aspartate + phosphate + H(+). It participates in pyrimidine metabolism; UMP biosynthesis via de novo pathway; (S)-dihydroorotate from bicarbonate: step 2/3. Its function is as follows. Catalyzes the condensation of carbamoyl phosphate and aspartate to form carbamoyl aspartate and inorganic phosphate, the committed step in the de novo pyrimidine nucleotide biosynthesis pathway. This chain is Aspartate carbamoyltransferase catalytic subunit, found in Cereibacter sphaeroides (strain ATCC 17025 / ATH 2.4.3) (Rhodobacter sphaeroides).